Reading from the N-terminus, the 1155-residue chain is DNA-directed RNA polymerase subunit beta (1155 aa).

The protein belongs to the RNA polymerase beta chain family. The RNAP catalytic core consists of 2 alpha, 1 beta, 1 beta' and 1 omega subunit. When a sigma factor is associated with the core the holoenzyme is formed, which can initiate transcription.

It carries out the reaction RNA(n) + a ribonucleoside 5'-triphosphate = RNA(n+1) + diphosphate. Its function is as follows. DNA-dependent RNA polymerase catalyzes the transcription of DNA into RNA using the four ribonucleoside triphosphates as substrates. This chain is DNA-directed RNA polymerase subunit beta, found in Borrelia recurrentis (strain A1).